The primary structure comprises 217 residues: Probable GTP-binding protein EngB (217 aa).

The EngB-type G domain maps to G29–V213. GTP-binding positions include G37–S44, G64–E68, D91–G94, T158–D161, and T192–S194. Mg(2+)-binding residues include S44 and T66.

Belongs to the TRAFAC class TrmE-Era-EngA-EngB-Septin-like GTPase superfamily. EngB GTPase family. Requires Mg(2+) as cofactor.

Functionally, necessary for normal cell division and for the maintenance of normal septation. The sequence is that of Probable GTP-binding protein EngB from Rhizobium leguminosarum bv. trifolii (strain WSM2304).